The chain runs to 135 residues: UPF0299 membrane protein YPK_2559 (135 aa).

3 helical membrane-spanning segments follow: residues 30-50 (LLLP…FVLL), 66-86 (LLIR…MQYY), and 93-113 (FGPI…VVAY).

This sequence belongs to the UPF0299 family.

The protein localises to the cell inner membrane. This Yersinia pseudotuberculosis serotype O:3 (strain YPIII) protein is UPF0299 membrane protein YPK_2559.